The primary structure comprises 346 residues: Dehydrogenase orf1 (346 aa).

Valine 43–glutamine 48 is a binding site for NADP(+). Leucine 133–valine 140 contacts substrate. Residues alanine 170 to valine 173, serine 193 to asparagine 196, tyrosine 211, and leucine 251 to asparagine 252 contribute to the NADP(+) site. A substrate-binding site is contributed by alanine 269–valine 273. Valine 336 to serine 337 is an NADP(+) binding site.

It belongs to the zinc-containing alcohol dehydrogenase family.

The protein operates within secondary metabolite biosynthesis. Its function is as follows. Dehydrogenase; part of the gene cluster that mediates the biosynthesis of nigerpyrone and its derivatives carbonarone A and pestalamide A. The biosynthesis pathway begins with the polyketide assembly by epaA to form phenylacetyl triketide precursor from successive condensation of two malonyl-CoA, presumably with one phenylacetyl-CoA starter unit produced by the phenylacetyl-CoA ligase epaB. For the nigerpyrone biosynthesis, the reactive polyketide chain is released as an aldehyde through the R-domain. A nonenzymatic cyclization and dehydration may create nigerpyrone. For the biosynthesis of carbonarone A and pestalamide A, an extra methyl group is added through the C-methyltransferase domain. Several further steps involving the dehydrogenase orf1, the cytochrome P450 monooxygenase orf2 and the FAD-dependent monooxygenase orf3 are required to form a carbonarone A precursor which is converted to carbonarone A via cyclization. The O-acetyltransferase epaC could catalyze the transfer of 2-methylsuccinyl-CoA, a common intermediate in the ethylmalonyl-CoA pathway, to generate the final product pestalamide A. This Aspergillus niger (strain ATCC MYA-4892 / CBS 513.88 / FGSC A1513) protein is Dehydrogenase orf1.